The sequence spans 473 residues: Photosystem II CP43 reaction center protein (473 aa).

A propeptide spanning residues 1 to 14 is cleaved from the precursor; it reads MKTLYSLRRFYPVE. Thr-15 carries the N-acetylthreonine modification. Thr-15 bears the Phosphothreonine mark. Transmembrane regions (helical) follow at residues 69-93, 134-155, 178-200, 255-275, and 291-312; these read LFEV…PHLA, LLGP…KDRN, KALY…RRIT, KPFA…LSYS, and WFNN…ASQA. [CaMn4O5] cluster is bound at residue Glu-367. A helical transmembrane segment spans residues 447–471; the sequence is RARAAAAGFEKGIDRDFEPVLSMTP.

This sequence belongs to the PsbB/PsbC family. PsbC subfamily. As to quaternary structure, PSII is composed of 1 copy each of membrane proteins PsbA, PsbB, PsbC, PsbD, PsbE, PsbF, PsbH, PsbI, PsbJ, PsbK, PsbL, PsbM, PsbT, PsbX, PsbY, PsbZ, Psb30/Ycf12, at least 3 peripheral proteins of the oxygen-evolving complex and a large number of cofactors. It forms dimeric complexes. It depends on Binds multiple chlorophylls and provides some of the ligands for the Ca-4Mn-5O cluster of the oxygen-evolving complex. It may also provide a ligand for a Cl- that is required for oxygen evolution. PSII binds additional chlorophylls, carotenoids and specific lipids. as a cofactor.

It is found in the plastid. Its subcellular location is the chloroplast thylakoid membrane. In terms of biological role, one of the components of the core complex of photosystem II (PSII). It binds chlorophyll and helps catalyze the primary light-induced photochemical processes of PSII. PSII is a light-driven water:plastoquinone oxidoreductase, using light energy to abstract electrons from H(2)O, generating O(2) and a proton gradient subsequently used for ATP formation. The polypeptide is Photosystem II CP43 reaction center protein (Illicium oligandrum (Star anise)).